Here is a 264-residue protein sequence, read N- to C-terminus: MLECSRDRAVTMEDEQDAHHRRQICDNCDRPNAICLCHVLPADLIPTNTEIIILHHPHESRHKLNTTPLLTKSLLNVTRIPARRLLRRHISTAGGTALPAPPTIYLFPSSPSSPAVTISEFKSLNLLNHREISNPPPLRLIVFDATWKHAKEMVKASEVVLREAGAVRVCLDTEIDASVSGGTIYDSELVLRKEPFGGCVTTAEAVARCLGAIEPDGEEIERKLISVLKEMVRFQSKYLKPMKPRPKLLKKRFQNQQPLEQEEE.

Zn(2+)-binding residues include Cys-25, Cys-28, Cys-35, and Cys-37. Positions Asp-144–Trp-147 match the DXTW motif. Positions Arg-245–Glu-264 are disordered. Over residues Gln-254 to Glu-264 the composition is skewed to polar residues.

This sequence belongs to the TDD superfamily. DTWD2 family.

It catalyses the reaction a uridine in tRNA + S-adenosyl-L-methionine = a 3-[(3S)-3-amino-3-carboxypropyl]uridine in tRNA + S-methyl-5'-thioadenosine + H(+). Functionally, catalyzes the formation of 3-(3-amino-3-carboxypropyl)uridine (acp3U) at position 20a in the D-loop of several cytoplasmic tRNAs (acp3U(20a)). This Arabidopsis thaliana (Mouse-ear cress) protein is tRNA-uridine aminocarboxypropyltransferase A.